Reading from the N-terminus, the 446-residue chain is Probable glucuronosyltransferase Os04g0650300 (446 aa).

Topologically, residues 1-30 (MKLPLLRPLWPMLSPAAGSPDSPPEPSKPS) are cytoplasmic. Residues 31-51 (LPAAWLLLHALFCATSMAVGF) form a helical; Signal-anchor for type II membrane protein membrane-spanning segment. Over 52-446 (RFSRLIVYLL…TTLLNTEGQH (395 aa)) the chain is Lumenal. Asn87 is a glycosylation site (N-linked (GlcNAc...) asparagine). Residues 425-446 (QQDAKPETPLKRTTLLNTEGQH) are disordered.

The protein belongs to the glycosyltransferase 43 family.

It is found in the golgi apparatus membrane. In terms of biological role, involved in the synthesis of glucuronoxylan hemicellulose in secondary cell walls. The protein is Probable glucuronosyltransferase Os04g0650300 of Oryza sativa subsp. japonica (Rice).